We begin with the raw amino-acid sequence, 1179 residues long: Integrin alpha-1 (1179 aa).

The N-terminal stretch at 1-28 is a signal peptide; the sequence is MAPRPRARPGVAVACCWLLTVVLRCCVS. The Extracellular portion of the chain corresponds to 29 to 1141; it reads FNVDVKNSMT…SKDGLPGRVP (1113 aa). Residues 30–91 form an FG-GAP 1 repeat; it reads NVDVKNSMTF…CPVGRGESLP (62 aa). A glycan (N-linked (GlcNAc...) asparagine) is linked at Asn-74. Cys-82 and Cys-92 are oxidised to a cystine. N-linked (GlcNAc...) asparagine glycans are attached at residues Asn-100, Asn-105, Asn-112, Asn-217, Asn-317, Asn-341, Asn-402, Asn-418, and Asn-460. Residues 101–160 form an FG-GAP 2 repeat; that stretch reads TSIPNVTEVKENMTFGSTLVTNPNGGFLACGPLYAYRCGHLHYTTGICSDVSPTFQVVNS. In terms of domain architecture, VWFA spans 161–360; the sequence is IAPVQECSTQ…IVKTLGERIF (200 aa). Residues 365 to 417 form an FG-GAP 3 repeat; the sequence is TADQSAASFEMEMSQTGFSAHYSQDWVMLGAVGAYDWNGTVVMQKASQIIIPR. FG-GAP repeat units follow at residues 422–475, 476–538, 557–615, and 619–679; these read NVES…DGNI, KILQ…RFEY, SCTT…TIRK, and QRIP…FEPN. Residues Asp-498, Asp-500, Asp-502, and Asp-506 each contribute to the Ca(2+) site. A glycan (N-linked (GlcNAc...) asparagine) is linked at Asn-532. Residues Asp-580, Asn-582, Asp-584, Asp-588, Asp-642, Asn-644, Asp-646, and Asp-650 each contribute to the Ca(2+) site. Cys-688 and Cys-697 are oxidised to a cystine. N-linked (GlcNAc...) asparagine glycosylation is found at Asn-699, Asn-748, and Asn-780. Cys-703 and Cys-756 are oxidised to a cystine. Residues Cys-808 and Cys-814 are joined by a disulfide bond. N-linked (GlcNAc...) asparagine glycosylation is found at Asn-840, Asn-883, Asn-908, Asn-915, Asn-939, Asn-966, Asn-974, and Asn-1008. A disulfide bridge connects residues Cys-878 and Cys-886. Cystine bridges form between Cys-1030–Cys-1062 and Cys-1065–Cys-1072. Asn-1073, Asn-1083, Asn-1102, and Asn-1113 each carry an N-linked (GlcNAc...) asparagine glycan. The helical transmembrane segment at 1142-1164 threads the bilayer; it reads LWVILLSAFAGLLLLMLLILALW. Residues 1165 to 1179 lie on the Cytoplasmic side of the membrane; sequence KIGFFKRPLKKKMEK. The GFFKR motif signature appears at 1167 to 1171; that stretch reads GFFKR.

It belongs to the integrin alpha chain family. Heterodimer of an alpha and a beta subunit. Alpha-1 associates with beta-1. Interacts with RAB21. Interacts (via cytoplasmic domain) with PTPN2; activates PTPN2 phosphatase activity towards EGFR and negatively regulates EGF signaling.

It localises to the membrane. Its function is as follows. Integrin alpha-1/beta-1 is a receptor for laminin and collagen. It recognizes the proline-hydroxylated sequence G-F-P-G-E-R in collagen. Involved in anchorage-dependent, negative regulation of EGF-stimulated cell growth. The sequence is that of Integrin alpha-1 (ITGA1) from Homo sapiens (Human).